A 332-amino-acid chain; its full sequence is UPF0285 protein MK0078 (332 aa).

Belongs to the UPF0285 family.

The polypeptide is UPF0285 protein MK0078 (Methanopyrus kandleri (strain AV19 / DSM 6324 / JCM 9639 / NBRC 100938)).